Reading from the N-terminus, the 1492-residue chain is Copper-transporting ATPase 1 (1492 aa).

The Cytoplasmic portion of the chain corresponds to Met-1 to Ser-645. HMA domains lie at Asn-8 to Leu-74 and Thr-85 to Gly-151. Residues Thr-18, Cys-19, and Cys-22 each coordinate Cu(+). Thr-152 carries the post-translational modification Phosphothreonine. The HMA 3 domain occupies Val-171–Phe-237. Cys-182 and Cys-185 together coordinate Cu(+). Ser-270 is modified (phosphoserine). The HMA 4 domain occupies Ser-277–Tyr-343. Cys-288 and Cys-291 together coordinate Cu(+). At Thr-327 the chain carries Phosphothreonine. A phosphoserine mark is found at Ser-339, Ser-353, Ser-357, and Ser-362. 3 HMA domains span residues Gln-377–Val-443, Asn-480–Val-546, and Gly-556–Ser-622. Residues Cys-388, Cys-391, Cys-491, Cys-494, Cys-567, and Cys-570 each coordinate Cu(+). A helical membrane pass occupies residues Phe-646–Asp-667. Topologically, residues His-668–Leu-706 are extracellular. Residue Asn-678 is glycosylated (N-linked (GlcNAc...) asparagine). A helical transmembrane segment spans residues Leu-707–Gln-726. Over Ala-727 to His-733 the chain is Cytoplasmic. A helical membrane pass occupies residues Lys-734–Leu-754. Topologically, residues Val-755–Phe-773 are extracellular. Residues Asp-774–Lys-794 traverse the membrane as a helical segment. Residues Gly-795–Asp-927 lie on the Cytoplasmic side of the membrane. The chain crosses the membrane as a helical span at residues Lys-928 to Ile-951. The Extracellular portion of the chain corresponds to Gly-952–Phe-981. A helical membrane pass occupies residues Gln-982 to Ala-1003. Over Val-1004–Arg-1348 the chain is Cytoplasmic. Asp-1036 acts as the 4-aspartylphosphate intermediate in catalysis. An ATP-binding site is contributed by Glu-1073. Thr-1204 is modified (phosphothreonine). Asp-1293 and Asp-1297 together coordinate Mg(2+). The helical transmembrane segment at Ile-1349–Ala-1366 threads the bilayer. Topologically, residues Gly-1367 to Gln-1377 are extracellular. Residues Pro-1378–Leu-1397 traverse the membrane as a helical segment. Residues Phe-1398–Leu-1492 are Cytoplasmic-facing. 5 positions are modified to phosphoserine: Ser-1422, Ser-1424, Ser-1452, Ser-1455, and Ser-1458. Residues Leu-1459–Leu-1460 carry the Endocytosis signal motif. 4 positions are modified to phosphoserine: Ser-1461, Ser-1465, Ser-1468, and Ser-1478. The segment at Ser-1478 to Leu-1492 is PDZD11-binding. An Endocytosis signal motif is present at residues Leu-1479 to Leu-1480.

Belongs to the cation transport ATPase (P-type) (TC 3.A.3) family. Type IB subfamily. As to quaternary structure, monomer. Interacts with PDZD11. Interacts with ATOX1 and COMMD1. Interacts with TYRP1. Directly interacts with SOD3; this interaction is copper-dependent and is required for SOD3 activity. As to expression, expressed in hippocampal neuron (at protein level). Expressed in anterior pituitary gland (at protein level).

The protein resides in the golgi apparatus. It is found in the trans-Golgi network membrane. It localises to the cell membrane. The protein localises to the melanosome membrane. Its subcellular location is the early endosome membrane. The protein resides in the cell projection. It is found in the axon. It localises to the dendrite. The protein localises to the postsynaptic density. It carries out the reaction Cu(+)(in) + ATP + H2O = Cu(+)(out) + ADP + phosphate + H(+). Its function is as follows. ATP-driven copper (Cu(+)) ion pump that plays an important role in intracellular copper ion homeostasis. Within a catalytic cycle, acquires Cu(+) ion from donor protein on the cytoplasmic side of the membrane and delivers it to acceptor protein on the lumenal side. The transfer of Cu(+) ion across the membrane is coupled to ATP hydrolysis and is associated with a transient phosphorylation that shifts the pump conformation from inward-facing to outward-facing state. Under physiological conditions, at low cytosolic copper concentration, it is localized at the trans-Golgi network (TGN) where it transfers Cu(+) ions to cuproenzymes of the secretory pathway. Upon elevated cytosolic copper concentrations, it relocalizes to the plasma membrane where it is responsible for the export of excess Cu(+) ions. May play a dual role in neuron function and survival by regulating cooper efflux and neuronal transmission at the synapse as well as by supplying Cu(+) ions to enzymes such as PAM, TYR and SOD3. In the melanosomes of pigmented cells, provides copper cofactor to TYR to form an active TYR holoenzyme for melanin biosynthesis. The protein is Copper-transporting ATPase 1 of Rattus norvegicus (Rat).